A 240-amino-acid chain; its full sequence is Protein OPG176 (240 aa).

The protein belongs to the orthopoxvirus OPG176 family. As to quaternary structure, tetramer. Interacts with host MYD88, TRF4, TICAM2 and MAL.

BCL2-like protein which disrupts the host immune response by inhibiting the TLR4 signaling pathway leading to NF-kappa-B activation. Acts close to the plasma membrane and targets several host TIR-domain containing adapter proteins including MYD88, TIRAP, TRIF and TICAM2. In turn, blocks the host NF-kappa-B and TRIF-mediated IRF3 activation. The protein is Protein OPG176 (OPG176) of Bos taurus (Bovine).